A 451-amino-acid chain; its full sequence is uncharacterized protein (451 aa).

Disordered regions lie at residues 89-150 (PRLS…ISRY) and 164-222 (QVGE…KTFG). Over residues 104 to 121 (QKPTISRESFVWESSASI) the composition is skewed to polar residues. Residues 137-147 (SSTPSIEPESI) are compositionally biased toward low complexity. The segment covering 175–222 (RAADSENERRPSEVREAPESRRRRETSETGSDKSKAPPPIKEIKKTFG) has biased composition (basic and acidic residues). The chain crosses the membrane as a helical span at residues 358-376 (LIGLMLFQTTIFIISKIIA). A disordered region spans residues 401-451 (RNGSSSGFASGTSSPLVFIPRTKRPSLVPSEKKMRGPSVTRDLAAEQERDA). The segment covering 403 to 414 (GSSSGFASGTSS) has biased composition (low complexity).

This sequence belongs to the IIV-6 067R family.

It is found in the membrane. This is an uncharacterized protein from Invertebrate iridescent virus 3 (IIV-3).